The chain runs to 119 residues: Ribonuclease P protein component (119 aa).

It belongs to the RnpA family. As to quaternary structure, consists of a catalytic RNA component (M1 or rnpB) and a protein subunit.

It carries out the reaction Endonucleolytic cleavage of RNA, removing 5'-extranucleotides from tRNA precursor.. Its function is as follows. RNaseP catalyzes the removal of the 5'-leader sequence from pre-tRNA to produce the mature 5'-terminus. It can also cleave other RNA substrates such as 4.5S RNA. The protein component plays an auxiliary but essential role in vivo by binding to the 5'-leader sequence and broadening the substrate specificity of the ribozyme. The polypeptide is Ribonuclease P protein component (Nitrosococcus oceani (strain ATCC 19707 / BCRC 17464 / JCM 30415 / NCIMB 11848 / C-107)).